The following is a 405-amino-acid chain: Serine/threonine transporter SstT (405 aa).

9 helical membrane passes run 13–33 (GNLVLQILAGILLGAAMATFS), 43–63 (IGNLFVGALKAVAPVLVFILV), 81–101 (IVVLYLFGTFSAALTAVILSF), 140–160 (ALMNANYIGILAWGVGLGLAL), 191–211 (FGIFGLVASTFATTGFDALAG), 215–235 (LLAVLLGAMAFIALVVNPMIV), 297–317 (MAGAAITITVLTLAAVHTMGI), 338–358 (ASGVAGGSLLLIPLACGLFGI), and 362–382 (IAMQVVAVGFIIGVIQDSAET).

It belongs to the dicarboxylate/amino acid:cation symporter (DAACS) (TC 2.A.23) family.

Its subcellular location is the cell inner membrane. The enzyme catalyses L-serine(in) + Na(+)(in) = L-serine(out) + Na(+)(out). It carries out the reaction L-threonine(in) + Na(+)(in) = L-threonine(out) + Na(+)(out). In terms of biological role, involved in the import of serine and threonine into the cell, with the concomitant import of sodium (symport system). This chain is Serine/threonine transporter SstT, found in Vibrio cholerae serotype O1 (strain ATCC 39315 / El Tor Inaba N16961).